The primary structure comprises 510 residues: Indoleacetate--CoA ligase (510 aa).

It belongs to the ATP-dependent AMP-binding enzyme family. Monomer.

The enzyme catalyses (indol-3-yl)acetate + ATP + CoA = (indol-3-yl)acetyl-CoA + AMP + diphosphate. It catalyses the reaction (indol-3-yl)acetate + ATP + H(+) = (indol-3-yl)acetyl-AMP + diphosphate. It carries out the reaction (indol-3-yl)acetyl-AMP + CoA = (indol-3-yl)acetyl-CoA + AMP + H(+). Inhibited by high concentrations of substrates, and by the synthetic auxin compound 2,4-dichlorophenoxyacetate (2,4-D), which does not serve as substrate. Its function is as follows. Involved in degradation of indoleacetate, the most common member of the auxin class of plant hormones. Highly specific indoleacetate-CoA ligase which catalyzes the ATP-dependent activation of indoleacetate (IAA) to indoleacetyl-CoA. Also activates some closely related compounds such as the non-physiological compound (2-naphthyl)acetate and phenylacetate, which seems to be a fortuitous substrate for IaaB. In Aromatoleum aromaticum (strain DSM 19018 / LMG 30748 / EbN1) (Azoarcus sp. (strain EbN1)), this protein is Indoleacetate--CoA ligase.